A 253-amino-acid chain; its full sequence is Indole-3-glycerol phosphate synthase (253 aa).

It belongs to the TrpC family.

The catalysed reaction is 1-(2-carboxyphenylamino)-1-deoxy-D-ribulose 5-phosphate + H(+) = (1S,2R)-1-C-(indol-3-yl)glycerol 3-phosphate + CO2 + H2O. Its pathway is amino-acid biosynthesis; L-tryptophan biosynthesis; L-tryptophan from chorismate: step 4/5. This is Indole-3-glycerol phosphate synthase from Petrotoga mobilis (strain DSM 10674 / SJ95).